Here is a 276-residue protein sequence, read N- to C-terminus: MPELPEVEVTRRGIEPYVSGRKVERVDVRTPALRWPIPADLAKTLRGHVVRKVERRGKYLLFEIDAGWFIVHLGMTGTLRVLRHVPHPPAAAKHDHIDWIFDEFILRYRDPRRFGAVLWHPREAGDVLEHPLLASLGVEPFSPAFSGALMHRLTRGRKVSVKQALLAGEIVVGVGNIYASESLFRAGIRPTTAAGRVSLVRYELLADAVRVTLAAAIEKGGSTLRDFVGSNGESGYFQLDYFVYDRAGLPCRVCGTPIKQIVQGQRSTYFCPTCQR.

Residue Pro2 is the Schiff-base intermediate with DNA of the active site. Catalysis depends on Glu3, which acts as the Proton donor. The active-site Proton donor; for beta-elimination activity is Lys58. Residues His94, Arg112, and Arg157 each contribute to the DNA site. The FPG-type zinc finger occupies 242 to 276 (FVYDRAGLPCRVCGTPIKQIVQGQRSTYFCPTCQR). Residue Arg266 is the Proton donor; for delta-elimination activity of the active site.

The protein belongs to the FPG family. In terms of assembly, monomer. Zn(2+) serves as cofactor.

It catalyses the reaction Hydrolysis of DNA containing ring-opened 7-methylguanine residues, releasing 2,6-diamino-4-hydroxy-5-(N-methyl)formamidopyrimidine.. The catalysed reaction is 2'-deoxyribonucleotide-(2'-deoxyribose 5'-phosphate)-2'-deoxyribonucleotide-DNA = a 3'-end 2'-deoxyribonucleotide-(2,3-dehydro-2,3-deoxyribose 5'-phosphate)-DNA + a 5'-end 5'-phospho-2'-deoxyribonucleoside-DNA + H(+). In terms of biological role, involved in base excision repair of DNA damaged by oxidation or by mutagenic agents. Acts as a DNA glycosylase that recognizes and removes damaged bases. Has a preference for oxidized purines, such as 7,8-dihydro-8-oxoguanine (8-oxoG). Has AP (apurinic/apyrimidinic) lyase activity and introduces nicks in the DNA strand. Cleaves the DNA backbone by beta-delta elimination to generate a single-strand break at the site of the removed base with both 3'- and 5'-phosphates. This Paraburkholderia phytofirmans (strain DSM 17436 / LMG 22146 / PsJN) (Burkholderia phytofirmans) protein is Formamidopyrimidine-DNA glycosylase.